The following is a 159-amino-acid chain: 2-C-methyl-D-erythritol 2,4-cyclodiphosphate synthase (159 aa).

A divalent metal cation is bound by residues Asp-8 and His-10. Residues 8–10 (DVH) and 34–35 (HS) contribute to the 4-CDP-2-C-methyl-D-erythritol 2-phosphate site. His-42 lines the a divalent metal cation pocket. 4-CDP-2-C-methyl-D-erythritol 2-phosphate contacts are provided by residues 56 to 58 (DIG), 100 to 106 (AQAPKMA), 132 to 135 (TTTE), Phe-139, and Arg-142.

This sequence belongs to the IspF family. Homotrimer. Requires a divalent metal cation as cofactor.

It carries out the reaction 4-CDP-2-C-methyl-D-erythritol 2-phosphate = 2-C-methyl-D-erythritol 2,4-cyclic diphosphate + CMP. The protein operates within isoprenoid biosynthesis; isopentenyl diphosphate biosynthesis via DXP pathway; isopentenyl diphosphate from 1-deoxy-D-xylulose 5-phosphate: step 4/6. Functionally, involved in the biosynthesis of isopentenyl diphosphate (IPP) and dimethylallyl diphosphate (DMAPP), two major building blocks of isoprenoid compounds. Catalyzes the conversion of 4-diphosphocytidyl-2-C-methyl-D-erythritol 2-phosphate (CDP-ME2P) to 2-C-methyl-D-erythritol 2,4-cyclodiphosphate (ME-CPP) with a corresponding release of cytidine 5-monophosphate (CMP). The sequence is that of 2-C-methyl-D-erythritol 2,4-cyclodiphosphate synthase from Marinobacter nauticus (strain ATCC 700491 / DSM 11845 / VT8) (Marinobacter aquaeolei).